Here is a 443-residue protein sequence, read N- to C-terminus: Toxin YjjJ (443 aa).

D342 acts as the Proton acceptor in catalysis.

Belongs to the HipA Ser/Thr kinase family.

Toxic when overexpressed in E.coli, leading to long filamentous cells. The toxic effect is neutralized by non-cognate antitoxin HipB. Does not seem to inhibit DNA, RNA or protein synthesis, and unlike paralogous toxin HipA its toxic activity is not counteracted by overexpression of GltX. Binds DNA. Might be a protein kinase. The polypeptide is Toxin YjjJ (yjjJ) (Escherichia coli (strain K12)).